The following is a 138-amino-acid chain: Putative nickel-responsive regulator (138 aa).

Ni(2+) contacts are provided by H78, H89, H91, and C97.

Belongs to the transcriptional regulatory CopG/NikR family. It depends on Ni(2+) as a cofactor.

Transcriptional regulator. The chain is Putative nickel-responsive regulator from Pyrococcus abyssi (strain GE5 / Orsay).